Here is a 136-residue protein sequence, read N- to C-terminus: Glutamyl-tRNA(Gln) amidotransferase subunit C, mitochondrial (136 aa).

A mitochondrion-targeting transit peptide spans 1–27 (MWARAVHLGLRAAARGRRGFTSKADPQ).

This sequence belongs to the GatC family. As to quaternary structure, subunit of the heterotrimeric GatCAB amidotransferase (AdT) complex, composed of A (QRSL1), B (GATB) and C (GATC) subunits.

The protein resides in the mitochondrion. The enzyme catalyses L-glutamyl-tRNA(Gln) + L-glutamine + ATP + H2O = L-glutaminyl-tRNA(Gln) + L-glutamate + ADP + phosphate + H(+). Functionally, allows the formation of correctly charged Gln-tRNA(Gln) through the transamidation of misacylated Glu-tRNA(Gln) in the mitochondria. The reaction takes place in the presence of glutamine and ATP through an activated gamma-phospho-Glu-tRNA(Gln). The protein is Glutamyl-tRNA(Gln) amidotransferase subunit C, mitochondrial of Bos taurus (Bovine).